The sequence spans 53 residues: Large ribosomal subunit protein eL40 (53 aa).

The protein belongs to the eukaryotic ribosomal protein eL40 family.

This Pyrobaculum arsenaticum (strain DSM 13514 / JCM 11321 / PZ6) protein is Large ribosomal subunit protein eL40.